Reading from the N-terminus, the 160-residue chain is Probable prefoldin subunit 5 (160 aa).

This sequence belongs to the prefoldin subunit alpha family. Heterohexamer of two PFD-alpha type and four PFD-beta type subunits.

In terms of biological role, binds specifically to cytosolic chaperonin (c-CPN) and transfers target proteins to it. Binds to nascent polypeptide chain and promotes folding in an environment in which there are many competing pathways for nonnative proteins. This chain is Probable prefoldin subunit 5 (pfdn5), found in Dictyostelium discoideum (Social amoeba).